Here is a 27-residue protein sequence, read N- to C-terminus: FPPHKGKFDKKFIELVIIVDHSXXTYK.

The Peptidase M12B domain maps to 12–27; the sequence is FIELVIIVDHSXXTYK. Glu-14 lines the Ca(2+) pocket.

The protein belongs to the venom metalloproteinase (M12B) family. P-III subfamily. P-IIId sub-subfamily. As to quaternary structure, heterodimer of a metalloproteinase subunit and a regulatory subunit comprising two homologous disulfide-linked lectins (AC P81798). Zn(2+) serves as cofactor. Expressed by the venom gland.

It localises to the secreted. Its function is as follows. This carinactivase-like calcium-dependent prothrombin (F2) activator activates prothrombin via recognition of the calcium ion bound conformation of its gamma-carboxyglutamic acid (GLA) domain, and the subsequent conversion of prothrombin to active thrombin is catalyzed by the catalytic subunit. In Echis multisquamatus (Central Asian sand viper), this protein is Zinc metalloproteinase multactivase catalytic subunit.